We begin with the raw amino-acid sequence, 114 residues long: uncharacterized protein (114 aa).

A run of 3 helical transmembrane segments spans residues 38-60 (PLWF…TAGI), 64-86 (YAAI…AHMF), and 91-113 (SVIM…MGSY).

It is found in the cell membrane. This is an uncharacterized protein from Bacillus subtilis (strain 168).